Consider the following 267-residue polypeptide: NAD kinase 2 (267 aa).

The active-site Proton acceptor is Asp52. Residues Asp52–Gly53, Asn124–Glu125, Arg151, Asp153, Thr164–Ser169, and Ala188 each bind NAD(+).

It belongs to the NAD kinase family. It depends on a divalent metal cation as a cofactor.

It is found in the cytoplasm. It catalyses the reaction NAD(+) + ATP = ADP + NADP(+) + H(+). Functionally, involved in the regulation of the intracellular balance of NAD and NADP, and is a key enzyme in the biosynthesis of NADP. Catalyzes specifically the phosphorylation on 2'-hydroxyl of the adenosine moiety of NAD to yield NADP. This chain is NAD kinase 2, found in Bacillus subtilis (strain 168).